Here is a 105-residue protein sequence, read N- to C-terminus: Nucleoid-associated protein RPE_4812 (105 aa).

It belongs to the YbaB/EbfC family. As to quaternary structure, homodimer.

Its subcellular location is the cytoplasm. It localises to the nucleoid. Its function is as follows. Binds to DNA and alters its conformation. May be involved in regulation of gene expression, nucleoid organization and DNA protection. The polypeptide is Nucleoid-associated protein RPE_4812 (Rhodopseudomonas palustris (strain BisA53)).